Reading from the N-terminus, the 137-residue chain is Nucleoside diphosphate kinase (137 aa).

Residues lysine 9, phenylalanine 57, arginine 85, threonine 91, arginine 102, and asparagine 112 each contribute to the ATP site. The active-site Pros-phosphohistidine intermediate is the histidine 115.

The protein belongs to the NDK family. In terms of assembly, homotetramer. It depends on Mg(2+) as a cofactor.

The protein resides in the cytoplasm. It carries out the reaction a 2'-deoxyribonucleoside 5'-diphosphate + ATP = a 2'-deoxyribonucleoside 5'-triphosphate + ADP. The catalysed reaction is a ribonucleoside 5'-diphosphate + ATP = a ribonucleoside 5'-triphosphate + ADP. Functionally, major role in the synthesis of nucleoside triphosphates other than ATP. The ATP gamma phosphate is transferred to the NDP beta phosphate via a ping-pong mechanism, using a phosphorylated active-site intermediate. This Desulfotalea psychrophila (strain LSv54 / DSM 12343) protein is Nucleoside diphosphate kinase.